A 257-amino-acid polypeptide reads, in one-letter code: tRNA pseudouridine synthase A (257 aa).

D53 serves as the catalytic Nucleophile. Substrate is bound at residue Y111.

The protein belongs to the tRNA pseudouridine synthase TruA family. Homodimer.

The enzyme catalyses uridine(38/39/40) in tRNA = pseudouridine(38/39/40) in tRNA. Functionally, formation of pseudouridine at positions 38, 39 and 40 in the anticodon stem and loop of transfer RNAs. The polypeptide is tRNA pseudouridine synthase A (Xanthomonas euvesicatoria pv. vesicatoria (strain 85-10) (Xanthomonas campestris pv. vesicatoria)).